The primary structure comprises 388 residues: uncharacterized protein (388 aa).

4 residues coordinate [4Fe-4S] cluster: C18, C24, C27, and C99. The S-adenosyl-L-methionine site is built by Q212, E262, and N313. The active-site Nucleophile is C343.

It belongs to the class I-like SAM-binding methyltransferase superfamily. RNA M5U methyltransferase family.

This is an uncharacterized protein from Bdellovibrio bacteriovorus (strain ATCC 15356 / DSM 50701 / NCIMB 9529 / HD100).